A 229-amino-acid polypeptide reads, in one-letter code: 2-C-methyl-D-erythritol 4-phosphate cytidylyltransferase (229 aa).

This sequence belongs to the IspD/TarI cytidylyltransferase family. IspD subfamily.

The catalysed reaction is 2-C-methyl-D-erythritol 4-phosphate + CTP + H(+) = 4-CDP-2-C-methyl-D-erythritol + diphosphate. It participates in isoprenoid biosynthesis; isopentenyl diphosphate biosynthesis via DXP pathway; isopentenyl diphosphate from 1-deoxy-D-xylulose 5-phosphate: step 2/6. Catalyzes the formation of 4-diphosphocytidyl-2-C-methyl-D-erythritol from CTP and 2-C-methyl-D-erythritol 4-phosphate (MEP). This Shouchella clausii (strain KSM-K16) (Alkalihalobacillus clausii) protein is 2-C-methyl-D-erythritol 4-phosphate cytidylyltransferase.